Consider the following 101-residue polypeptide: Ascorbate-specific PTS system EIIB component (101 aa).

The region spanning 1 to 100 (MTVRILAVCG…VIKEHFPQDV (100 aa)) is the PTS EIIB type-2 domain. Cys-9 functions as the Phosphocysteine intermediate in the catalytic mechanism. At Cys-9 the chain carries Phosphocysteine.

The protein localises to the cytoplasm. It carries out the reaction N(pros)-phospho-L-histidyl-[protein] + L-ascorbate(out) = L-ascorbate 6-phosphate(in) + L-histidyl-[protein]. In terms of biological role, the phosphoenolpyruvate-dependent sugar phosphotransferase system (sugar PTS), a major carbohydrate active transport system, catalyzes the phosphorylation of incoming sugar substrates concomitantly with their translocation across the cell membrane. The enzyme II UlaABC PTS system is involved in ascorbate transport. This Escherichia coli O157:H7 protein is Ascorbate-specific PTS system EIIB component (ulaB).